Here is a 168-residue protein sequence, read N- to C-terminus: Crossover junction endodeoxyribonuclease RuvC (168 aa).

Residues aspartate 9, glutamate 70, and aspartate 145 contribute to the active site. Aspartate 9, glutamate 70, and aspartate 145 together coordinate Mg(2+).

The protein belongs to the RuvC family. As to quaternary structure, homodimer which binds Holliday junction (HJ) DNA. The HJ becomes 2-fold symmetrical on binding to RuvC with unstacked arms; it has a different conformation from HJ DNA in complex with RuvA. In the full resolvosome a probable DNA-RuvA(4)-RuvB(12)-RuvC(2) complex forms which resolves the HJ. Requires Mg(2+) as cofactor.

The protein resides in the cytoplasm. It catalyses the reaction Endonucleolytic cleavage at a junction such as a reciprocal single-stranded crossover between two homologous DNA duplexes (Holliday junction).. The RuvA-RuvB-RuvC complex processes Holliday junction (HJ) DNA during genetic recombination and DNA repair. Endonuclease that resolves HJ intermediates. Cleaves cruciform DNA by making single-stranded nicks across the HJ at symmetrical positions within the homologous arms, yielding a 5'-phosphate and a 3'-hydroxyl group; requires a central core of homology in the junction. The consensus cleavage sequence is 5'-(A/T)TT(C/G)-3'. Cleavage occurs on the 3'-side of the TT dinucleotide at the point of strand exchange. HJ branch migration catalyzed by RuvA-RuvB allows RuvC to scan DNA until it finds its consensus sequence, where it cleaves and resolves the cruciform DNA. The polypeptide is Crossover junction endodeoxyribonuclease RuvC (Chlamydia caviae (strain ATCC VR-813 / DSM 19441 / 03DC25 / GPIC) (Chlamydophila caviae)).